We begin with the raw amino-acid sequence, 118 residues long: Probable dihydroneopterin aldolase (118 aa).

Substrate-binding positions include Glu-21, Tyr-53, and 72-73 (IE). The Proton donor/acceptor role is filled by Lys-98.

This sequence belongs to the DHNA family.

The enzyme catalyses 7,8-dihydroneopterin = 6-hydroxymethyl-7,8-dihydropterin + glycolaldehyde. It participates in cofactor biosynthesis; tetrahydrofolate biosynthesis; 2-amino-4-hydroxy-6-hydroxymethyl-7,8-dihydropteridine diphosphate from 7,8-dihydroneopterin triphosphate: step 3/4. Functionally, catalyzes the conversion of 7,8-dihydroneopterin to 6-hydroxymethyl-7,8-dihydropterin. In Synechocystis sp. (strain ATCC 27184 / PCC 6803 / Kazusa), this protein is Probable dihydroneopterin aldolase (folB).